The primary structure comprises 488 residues: Ankyrin repeat domain-containing protein 13C (488 aa).

A disordered region spans residues 1 to 60 (MTGEKIRSVRKERKSGLDLLEPDEEPAATGPAKHRGSKIFSGGNHRISRSSSSPGDPDGA). A compositionally biased stretch (low complexity) spans 41-59 (SGGNHRISRSSSSPGDPDG). ANK repeat units follow at residues 58-87 (DGAYPVHECVFRGDVRRLSSLIRTQNIAQK), 90-119 (HGNTPLHLAVMMGHKECAHLLLAHNAPVKV), and 123-152 (QGWSPLAEAISYGDRQMITALLRKLKQQSR).

It localises to the endoplasmic reticulum membrane. Acts as a molecular chaperone for G protein-coupled receptors, regulating their biogenesis and exit from the ER. The protein is Ankyrin repeat domain-containing protein 13C (ankrd13c) of Danio rerio (Zebrafish).